A 1090-amino-acid polypeptide reads, in one-letter code: Aminopeptidase-like protein AC3.5 (1090 aa).

Over 1-77 (MEDVDLGKDR…KPKKRIACSP (77 aa)) the chain is Cytoplasmic. The segment covering 21–33 (GNGSASNLNNRNN) has biased composition (low complexity). Positions 21–71 (GNGSASNLNNRNNIPLSEKAAKEPLQTQPQEAPPAPKPKVQKQKPPVKPKK) are disordered. Residues 59–71 (KVQKQKPPVKPKK) show a composition bias toward basic residues. The chain crosses the membrane as a helical; Signal-anchor for type II membrane protein span at residues 78–98 (GSAICLFLLAVAAIIFAAFLG). At 99-1090 (HYLTKQNYEM…DEMESSEEQE (992 aa)) the chain is on the lumenal side. N-linked (GlcNAc...) asparagine glycans are attached at residues asparagine 115, asparagine 123, asparagine 143, asparagine 176, and asparagine 230. The disordered stretch occupies residues 217–259 (VTKRAKKSVDSGTNSTSEMPEGSGEEAMATTATTTTTESTTPV). Low complexity predominate over residues 241-257 (EEAMATTATTTTTESTT). N-linked (GlcNAc...) asparagine glycans are attached at residues asparagine 402, asparagine 710, asparagine 723, asparagine 789, asparagine 894, asparagine 919, asparagine 964, and asparagine 993. The span at 1069 to 1080 (YLDGKMKGPAKD) shows a compositional bias: basic and acidic residues. A disordered region spans residues 1069 to 1090 (YLDGKMKGPAKDDEMESSEEQE). Residues 1081-1090 (DEMESSEEQE) show a composition bias toward acidic residues.

The protein belongs to the peptidase M1 family.

The protein resides in the membrane. The sequence is that of Aminopeptidase-like protein AC3.5 from Caenorhabditis elegans.